The following is a 283-amino-acid chain: Phosphatidylserine decarboxylase proenzyme (283 aa).

Catalysis depends on charge relay system; for autoendoproteolytic cleavage activity residues Asp89, His146, and Ser249. Ser249 serves as the catalytic Schiff-base intermediate with substrate; via pyruvic acid; for decarboxylase activity. A Pyruvic acid (Ser); by autocatalysis modification is found at Ser249.

Belongs to the phosphatidylserine decarboxylase family. PSD-B subfamily. Prokaryotic type I sub-subfamily. As to quaternary structure, heterodimer of a large membrane-associated beta subunit and a small pyruvoyl-containing alpha subunit. Pyruvate is required as a cofactor. In terms of processing, is synthesized initially as an inactive proenzyme. Formation of the active enzyme involves a self-maturation process in which the active site pyruvoyl group is generated from an internal serine residue via an autocatalytic post-translational modification. Two non-identical subunits are generated from the proenzyme in this reaction, and the pyruvate is formed at the N-terminus of the alpha chain, which is derived from the carboxyl end of the proenzyme. The autoendoproteolytic cleavage occurs by a canonical serine protease mechanism, in which the side chain hydroxyl group of the serine supplies its oxygen atom to form the C-terminus of the beta chain, while the remainder of the serine residue undergoes an oxidative deamination to produce ammonia and the pyruvoyl prosthetic group on the alpha chain. During this reaction, the Ser that is part of the protease active site of the proenzyme becomes the pyruvoyl prosthetic group, which constitutes an essential element of the active site of the mature decarboxylase.

Its subcellular location is the cell membrane. It carries out the reaction a 1,2-diacyl-sn-glycero-3-phospho-L-serine + H(+) = a 1,2-diacyl-sn-glycero-3-phosphoethanolamine + CO2. It participates in phospholipid metabolism; phosphatidylethanolamine biosynthesis; phosphatidylethanolamine from CDP-diacylglycerol: step 2/2. Functionally, catalyzes the formation of phosphatidylethanolamine (PtdEtn) from phosphatidylserine (PtdSer). This Legionella pneumophila subsp. pneumophila (strain Philadelphia 1 / ATCC 33152 / DSM 7513) protein is Phosphatidylserine decarboxylase proenzyme.